Consider the following 357-residue polypeptide: P2Y purinoceptor 8 (357 aa).

The Extracellular segment spans residues M1–P26. Residue N4 is glycosylated (N-linked (GlcNAc...) asparagine). Residues V27 to L47 form a helical membrane-spanning segment. Topologically, residues C48–P56 are cytoplasmic. Residues S57–F77 form a helical membrane-spanning segment. Over Q78–L97 the chain is Extracellular. C95 and C174 form a disulfide bridge. Residues V98–I118 traverse the membrane as a helical segment. The Cytoplasmic segment spans residues E119–R137. The helical transmembrane segment at Y138–E158 threads the bilayer. The Extracellular portion of the chain corresponds to S159–N185. The chain crosses the membrane as a helical span at residues F186 to I206. The Cytoplasmic segment spans residues V207–Y236. Residues L237–L257 form a helical membrane-spanning segment. Topologically, residues A258–Y271 are extracellular. A helical transmembrane segment spans residues P272 to F294. Residues A295–F357 lie on the Cytoplasmic side of the membrane.

It belongs to the G-protein coupled receptor 1 family.

It localises to the cell membrane. In terms of biological role, probable receptor for purines coupled to G-proteins. The sequence is that of P2Y purinoceptor 8 (P2RY8) from Gallus gallus (Chicken).